Reading from the N-terminus, the 118-residue chain is MAKGLSLFERRRQRVRTTLRAKGNHRPRLSVHRSGQHIYAQVIDDDQRRTVVAASTLEKAVRDKSGATVAAAAETGKRLAERASAAGITKVVFDRGGFLFHGRVKALADAAREGGLEF.

It belongs to the universal ribosomal protein uL18 family. Part of the 50S ribosomal subunit; part of the 5S rRNA/L5/L18/L25 subcomplex. Contacts the 5S and 23S rRNAs.

This is one of the proteins that bind and probably mediate the attachment of the 5S RNA into the large ribosomal subunit, where it forms part of the central protuberance. The sequence is that of Large ribosomal subunit protein uL18 from Zymomonas mobilis subsp. mobilis (strain ATCC 31821 / ZM4 / CP4).